A 52-amino-acid chain; its full sequence is Lantibiotic epidermin (52 aa).

Residues Met1 to Arg30 constitute a propeptide that is removed on maturation. Positions Ser33–Cys37 form a cross-link, lanthionine (Ser-Cys). Residues Thr38–Cys41 constitute a cross-link (beta-methyllanthionine (Thr-Cys)). Thr44 carries the (Z)-2,3-didehydrobutyrine modification. The segment at residues Ser46–Cys51 is a cross-link (lanthionine (Ser-Cys)). The segment at residues Ser49–Cys52 is a cross-link (S-(2-aminovinyl)-D-cysteine (Ser-Cys)).

It belongs to the type A lantibiotic family. Post-translationally, maturation of lantibiotics involves the enzymatic conversion of Thr, and Ser into dehydrated AA and the formation of thioether bonds with cysteine. The C-terminal lanthionine undergoes decarboxylation. This is followed by membrane translocation and cleavage of the modified precursor. In terms of processing, the 2,3-didehydrobutyrine is determined to be the Z-isomer.

Lanthionine-containing peptide antibiotic (lantibiotic) active on Gram-positive bacteria. The bactericidal activity of lantibiotics is based on depolarization of energized bacterial cytoplasmic membranes, initiated by the formation of aqueous transmembrane pores. The protein is Lantibiotic epidermin (epiA) of Staphylococcus epidermidis.